Here is a 136-residue protein sequence, read N- to C-terminus: Ribosome-binding factor A (136 aa).

Positions 114–136 (DRANRPGPAADEPDEPDEPEDRR) are disordered. Positions 124–136 (DEPDEPDEPEDRR) are enriched in acidic residues.

The protein belongs to the RbfA family. In terms of assembly, monomer. Binds 30S ribosomal subunits, but not 50S ribosomal subunits or 70S ribosomes.

It is found in the cytoplasm. Its function is as follows. One of several proteins that assist in the late maturation steps of the functional core of the 30S ribosomal subunit. Associates with free 30S ribosomal subunits (but not with 30S subunits that are part of 70S ribosomes or polysomes). Required for efficient processing of 16S rRNA. May interact with the 5'-terminal helix region of 16S rRNA. This chain is Ribosome-binding factor A, found in Bordetella petrii (strain ATCC BAA-461 / DSM 12804 / CCUG 43448).